The chain runs to 335 residues: UPF0353 protein MAV335 (335 aa).

2 helical membrane passes run 18-38 (WFFL…LMQL) and 67-87 (LPAI…AGPT). The region spanning 98 to 295 (VVMLVIDVSQ…QELKSVYATL (198 aa)) is the VWFA domain. The chain crosses the membrane as a helical span at residues 309–329 (SVGWVRLGALVLRLAADALLI).

This sequence belongs to the UPF0353 family.

The protein localises to the cell membrane. This Mycobacterium avium protein is UPF0353 protein MAV335.